The following is a 184-amino-acid chain: Helix-loop-helix protein ngn-1 (184 aa).

A disordered region spans residues 1 to 55 (MYHHSPFYPHHLQTGEQDLDMERENDMDQNSKNSTQKPVKREKRRYRCRKRSPAT). Residues 28–37 (DQNSKNSTQK) are compositionally biased toward polar residues. Positions 38-52 (PVKREKRRYRCRKRS) are enriched in basic residues. A basic motif region spans residues 62–75 (VRRDKANARERRRM). The region spanning 62 to 114 (VRRDKANARERRRMNSLNDALEHLRGILPALPDEPKMTKIETLRKAQEYIASL) is the bHLH domain. Positions 76 to 114 (NSLNDALEHLRGILPALPDEPKMTKIETLRKAQEYIASL) are helix-loop-helix motif. A disordered region spans residues 164–184 (SNPPSQMYYHHHHQSPSFPHH). Residues 172 to 184 (YHHHHQSPSFPHH) show a composition bias toward basic residues.

As to quaternary structure, interacts with hlh-2; the interaction is direct.

It localises to the nucleus. Its function is as follows. Acts as a transcriptional regulator. Regulates expression of various genes, including homeobox protein unc-42 and helix-loop-helix protein hlh-34. Required for embryonic viability, neuromuscular development, organization of the nerve ring and neuronal cell body location. Regulates AIY neuron axon morphology and cell fate. Plays a role in cell autonomously establishing a neuronal left-right asymmetry. Involved in regulating glial specification. The protein is Helix-loop-helix protein ngn-1 of Caenorhabditis elegans.